We begin with the raw amino-acid sequence, 247 residues long: HTH-type transcriptional regulator SarU (247 aa).

2 DNA-binding regions (H-T-H motif) span residues 53–76 and 178–201; these read LKEIIGDILYKQSDVVKNIKSLSK and LKDLFESIRFMYPQIVRSVNRLNN.

It belongs to the SarA family.

The protein resides in the cytoplasm. Positive regulator of RNAII and RNAIII in a cell density-dependent manner. It can contribute to the expression of virulence genes controlled by agr. May also regulate target genes via an agr-independent pathway. This chain is HTH-type transcriptional regulator SarU (sarU), found in Staphylococcus aureus (strain COL).